The chain runs to 290 residues: Acetylglutamate kinase (290 aa).

Substrate-binding positions include 65 to 66 (GG), R87, and N186.

It belongs to the acetylglutamate kinase family. ArgB subfamily.

The protein resides in the cytoplasm. The catalysed reaction is N-acetyl-L-glutamate + ATP = N-acetyl-L-glutamyl 5-phosphate + ADP. It functions in the pathway amino-acid biosynthesis; L-arginine biosynthesis; N(2)-acetyl-L-ornithine from L-glutamate: step 2/4. Catalyzes the ATP-dependent phosphorylation of N-acetyl-L-glutamate. The protein is Acetylglutamate kinase of Mycobacterium sp. (strain KMS).